Here is a 297-residue protein sequence, read N- to C-terminus: Succinate dehydrogenase [ubiquinone] iron-sulfur subunit, mitochondrial (297 aa).

Residues 47-140 enclose the 2Fe-2S ferredoxin-type domain; the sequence is KKFEIYRWNP…SLKVYPLPHM (94 aa). Residues Cys-100, Cys-105, Cys-108, and Cys-120 each contribute to the [2Fe-2S] cluster site. The region spanning 185–215 is the 4Fe-4S ferredoxin-type domain; the sequence is DRSKLDGLYECILCACCSTSCPSYWWNAEKY. Positions 195, 198, and 201 each coordinate [4Fe-4S] cluster. Residue Cys-205 coordinates [3Fe-4S] cluster. Trp-210 serves as a coordination point for a ubiquinone. 2 residues coordinate [3Fe-4S] cluster: Cys-252 and Cys-258. A [4Fe-4S] cluster-binding site is contributed by Cys-262.

The protein belongs to the succinate dehydrogenase/fumarate reductase iron-sulfur protein family. In terms of assembly, component of complex II composed of four subunits: a flavoprotein (FP), an iron-sulfur protein (IP), and a cytochrome b composed of a large and a small subunit. [2Fe-2S] cluster serves as cofactor. Requires [3Fe-4S] cluster as cofactor. [4Fe-4S] cluster is required as a cofactor. In terms of tissue distribution, most abundant in the adult thorax and low in abdominal tissues.

The protein resides in the mitochondrion inner membrane. It carries out the reaction a quinone + succinate = fumarate + a quinol. Its pathway is carbohydrate metabolism; tricarboxylic acid cycle; fumarate from succinate (eukaryal route): step 1/1. In terms of biological role, iron-sulfur protein (IP) subunit of succinate dehydrogenase (SDH) that is involved in complex II of the mitochondrial electron transport chain and is responsible for transferring electrons from succinate to ubiquinone (coenzyme Q). The polypeptide is Succinate dehydrogenase [ubiquinone] iron-sulfur subunit, mitochondrial (SdhB) (Drosophila melanogaster (Fruit fly)).